We begin with the raw amino-acid sequence, 631 residues long: Phosphomethylpyrimidine synthase (631 aa).

Residues Asn-239, Met-268, Tyr-297, His-333, 353 to 355, 394 to 397, and Glu-433 contribute to the substrate site; these read SRG and DGLR. Position 437 (His-437) interacts with Zn(2+). Residue Tyr-460 coordinates substrate. His-501 contributes to the Zn(2+) binding site. [4Fe-4S] cluster is bound by residues Cys-581, Cys-584, and Cys-589.

It belongs to the ThiC family. As to quaternary structure, homodimer. It depends on [4Fe-4S] cluster as a cofactor.

It catalyses the reaction 5-amino-1-(5-phospho-beta-D-ribosyl)imidazole + S-adenosyl-L-methionine = 4-amino-2-methyl-5-(phosphooxymethyl)pyrimidine + CO + 5'-deoxyadenosine + formate + L-methionine + 3 H(+). It participates in cofactor biosynthesis; thiamine diphosphate biosynthesis. Catalyzes the synthesis of the hydroxymethylpyrimidine phosphate (HMP-P) moiety of thiamine from aminoimidazole ribotide (AIR) in a radical S-adenosyl-L-methionine (SAM)-dependent reaction. This Salmonella arizonae (strain ATCC BAA-731 / CDC346-86 / RSK2980) protein is Phosphomethylpyrimidine synthase.